A 318-amino-acid chain; its full sequence is Cytochrome c biogenesis protein CcsA (318 aa).

The next 8 helical transmembrane spans lie at 17–37 (VLAL…ISFW), 45–65 (SAVV…QLVL), 75–95 (ISNL…AQLL), 104–124 (IVSA…SFAL), 149–169 (VIMC…AVLF), 224–244 (TITV…VWAN), 258–275 (TWAL…HTRF), and 287–307 (VAVA…LLGI).

Belongs to the CcmF/CycK/Ccl1/NrfE/CcsA family. In terms of assembly, may interact with ccs1.

It localises to the cellular thylakoid membrane. Functionally, required during biogenesis of c-type cytochromes (cytochrome c6 and cytochrome f) at the step of heme attachment. This is Cytochrome c biogenesis protein CcsA from Prochlorococcus marinus (strain MIT 9313).